A 158-amino-acid polypeptide reads, in one-letter code: UPF0311 protein CA_C3321 (158 aa).

It belongs to the UPF0311 family.

In Clostridium acetobutylicum (strain ATCC 824 / DSM 792 / JCM 1419 / IAM 19013 / LMG 5710 / NBRC 13948 / NRRL B-527 / VKM B-1787 / 2291 / W), this protein is UPF0311 protein CA_C3321.